We begin with the raw amino-acid sequence, 348 residues long: Methylthioribose-1-phosphate isomerase (348 aa).

Residues 51 to 53 (RGA), R94, and Q199 contribute to the substrate site. D240 functions as the Proton donor in the catalytic mechanism. 250–251 (NK) provides a ligand contact to substrate.

This sequence belongs to the eIF-2B alpha/beta/delta subunits family. MtnA subfamily.

The enzyme catalyses 5-(methylsulfanyl)-alpha-D-ribose 1-phosphate = 5-(methylsulfanyl)-D-ribulose 1-phosphate. It participates in amino-acid biosynthesis; L-methionine biosynthesis via salvage pathway; L-methionine from S-methyl-5-thio-alpha-D-ribose 1-phosphate: step 1/6. Its function is as follows. Catalyzes the interconversion of methylthioribose-1-phosphate (MTR-1-P) into methylthioribulose-1-phosphate (MTRu-1-P). In Nitrosococcus oceani (strain ATCC 19707 / BCRC 17464 / JCM 30415 / NCIMB 11848 / C-107), this protein is Methylthioribose-1-phosphate isomerase.